The chain runs to 715 residues: Polyribonucleotide nucleotidyltransferase (715 aa).

Mg(2+) is bound by residues Asp488 and Asp494. The KH domain occupies 555-614 (PRIEVMHIPTDKIRDVIGSGGKVIREIVEKTGAKINIEDDGTVKIASSNAKEIEAAKKWI). In terms of domain architecture, S1 motif spans 624–692 (GEIYEGTVVK…ERGKVRLSMK (69 aa)).

This sequence belongs to the polyribonucleotide nucleotidyltransferase family. Requires Mg(2+) as cofactor.

The protein resides in the cytoplasm. The catalysed reaction is RNA(n+1) + phosphate = RNA(n) + a ribonucleoside 5'-diphosphate. In terms of biological role, involved in mRNA degradation. Catalyzes the phosphorolysis of single-stranded polyribonucleotides processively in the 3'- to 5'-direction. The polypeptide is Polyribonucleotide nucleotidyltransferase (Mesorhizobium japonicum (strain LMG 29417 / CECT 9101 / MAFF 303099) (Mesorhizobium loti (strain MAFF 303099))).